The primary structure comprises 56 residues: Large ribosomal subunit protein bL32 (56 aa).

The tract at residues methionine 1 to glutamine 26 is disordered. The segment covering lysine 7–arginine 16 has biased composition (basic residues).

It belongs to the bacterial ribosomal protein bL32 family.

In Shewanella baltica (strain OS155 / ATCC BAA-1091), this protein is Large ribosomal subunit protein bL32.